The sequence spans 475 residues: Putative poly(A) polymerase catalytic subunit (475 aa).

The protein belongs to the poxviridae poly(A) polymerase catalytic subunit family. Highly divergent.

It localises to the virion. The catalysed reaction is RNA(n) + ATP = RNA(n)-3'-adenine ribonucleotide + diphosphate. Polymerase that creates the 3'-poly(A) tail of mRNA's. The polypeptide is Putative poly(A) polymerase catalytic subunit (Ornithodoros (relapsing fever ticks)).